A 264-amino-acid polypeptide reads, in one-letter code: Meiotically up-regulated gene 162 protein (264 aa).

The next 7 membrane-spanning stretches (helical) occupy residues 18 to 38, 54 to 74, 84 to 104, 140 to 160, 174 to 194, 199 to 219, and 223 to 243; these read IVIF…WNLK, LWIY…AGSA, VFQV…GYSF, IISI…LLFL, HLSY…IKLI, FVLG…SLIT, and LISY…IWIY.

The protein resides in the endoplasmic reticulum membrane. Functionally, has a role in meiosis. The chain is Meiotically up-regulated gene 162 protein (mug162) from Schizosaccharomyces pombe (strain 972 / ATCC 24843) (Fission yeast).